Consider the following 523-residue polypeptide: Flavonoid 3',5'-hydroxylase (523 aa).

Cys-460 provides a ligand contact to heme.

Belongs to the cytochrome P450 family. Heme is required as a cofactor.

It carries out the reaction a 3',5'-unsubstituted flavanone + 2 reduced [NADPH--hemoprotein reductase] + 2 O2 = a 3',5'-dihydroxyflavanone + 2 oxidized [NADPH--hemoprotein reductase] + 2 H2O + 2 H(+). It functions in the pathway pigment biosynthesis; anthocyanin biosynthesis. Functionally, catalyzes the 3'5'-hydroxylation of naringenin and eriodictyol to form 5,7,3,'4',5'-pentahydroxyflavanone and 3',5'-hydroxylation of dihydrokaempferol and dihydroquercetin to form dihydromyricetin. The protein is Flavonoid 3',5'-hydroxylase (CYP75A6) of Campanula medium (Canterbury bells).